We begin with the raw amino-acid sequence, 232 residues long: Mediator of RNA polymerase II transcription subunit 18 (232 aa).

It belongs to the Mediator complex subunit 18 family. Component of the Mediator complex.

The protein resides in the nucleus. In terms of biological role, component of the Mediator complex, a coactivator involved in the regulated transcription of nearly all RNA polymerase II-dependent genes. Mediator functions as a bridge to convey information from gene-specific regulatory proteins to the basal RNA polymerase II transcription machinery. Mediator is recruited to promoters by direct interactions with regulatory proteins and serves as a scaffold for the assembly of a functional preinitiation complex with RNA polymerase II and the general transcription factors. The sequence is that of Mediator of RNA polymerase II transcription subunit 18 (mdt-18) from Caenorhabditis elegans.